The primary structure comprises 380 residues: NADPH quinone oxidoreductase (380 aa).

Residues 1 to 17 (MSSFLSKRFISTTQRAM) constitute a mitochondrion transit peptide.

It belongs to the zinc-containing alcohol dehydrogenase family. Quinone oxidoreductase subfamily. As to quaternary structure, homodimer.

The protein resides in the mitochondrion. It catalyses the reaction a quinone + NADH + H(+) = a quinol + NAD(+). It carries out the reaction a quinone + NADPH + H(+) = a quinol + NADP(+). NADPH quinone oxidoreductase that efficiently reduces 1,4-benzoquinone, whereas no activities are found for menadiones and methoxyquinones. The chain is NADPH quinone oxidoreductase from Kluyveromyces marxianus (Yeast).